Consider the following 177-residue polypeptide: RNA pyrophosphohydrolase (177 aa).

One can recognise a Nudix hydrolase domain in the interval 6–149 (GYRPNVGIVI…KRDVYRRVMK (144 aa)). Positions 38-59 (GGINPGESAEQAMYRELFEEVG) match the Nudix box motif.

Belongs to the Nudix hydrolase family. RppH subfamily. Requires a divalent metal cation as cofactor.

Its function is as follows. Accelerates the degradation of transcripts by removing pyrophosphate from the 5'-end of triphosphorylated RNA, leading to a more labile monophosphorylated state that can stimulate subsequent ribonuclease cleavage. The chain is RNA pyrophosphohydrolase from Cronobacter sakazakii (strain ATCC BAA-894) (Enterobacter sakazakii).